A 280-amino-acid polypeptide reads, in one-letter code: Shikimate dehydrogenase (NADP(+)) (280 aa).

Shikimate-binding positions include 18-20 and T65; that span reads SRS. The Proton acceptor role is filled by K69. 2 residues coordinate shikimate: N90 and D105. Residues 131–135, 154–159, and I219 each bind NADP(+); these read GAGGA and NRTRAR. Residue Y221 coordinates shikimate. Residue G242 coordinates NADP(+).

Belongs to the shikimate dehydrogenase family. As to quaternary structure, homodimer.

The enzyme catalyses shikimate + NADP(+) = 3-dehydroshikimate + NADPH + H(+). The protein operates within metabolic intermediate biosynthesis; chorismate biosynthesis; chorismate from D-erythrose 4-phosphate and phosphoenolpyruvate: step 4/7. Involved in the biosynthesis of the chorismate, which leads to the biosynthesis of aromatic amino acids. Catalyzes the reversible NADPH linked reduction of 3-dehydroshikimate (DHSA) to yield shikimate (SA). The protein is Shikimate dehydrogenase (NADP(+)) of Methylocella silvestris (strain DSM 15510 / CIP 108128 / LMG 27833 / NCIMB 13906 / BL2).